The sequence spans 304 residues: Undecaprenyl-diphosphatase (304 aa).

8 consecutive transmembrane segments (helical) span residues 5-25, 47-67, 72-92, 111-131, 137-157, 209-231, 248-268, and 283-303; these read FLFI…EFVP, GFPE…VVVL, ISSS…LKTS, FGIN…LFHD, LFST…LIVI, ISGL…AMVG, TNWI…LVVI, and FAIY…TKVI.

This sequence belongs to the UppP family.

It localises to the cell membrane. It carries out the reaction di-trans,octa-cis-undecaprenyl diphosphate + H2O = di-trans,octa-cis-undecaprenyl phosphate + phosphate + H(+). Functionally, catalyzes the dephosphorylation of undecaprenyl diphosphate (UPP). Confers resistance to bacitracin. The sequence is that of Undecaprenyl-diphosphatase from Clostridium perfringens (strain 13 / Type A).